The following is a 458-amino-acid chain: UDP-N-acetylmuramate--L-alanine ligase (458 aa).

Position 115–121 (115–121 (GSHGKTT)) interacts with ATP.

This sequence belongs to the MurCDEF family.

It localises to the cytoplasm. It carries out the reaction UDP-N-acetyl-alpha-D-muramate + L-alanine + ATP = UDP-N-acetyl-alpha-D-muramoyl-L-alanine + ADP + phosphate + H(+). The protein operates within cell wall biogenesis; peptidoglycan biosynthesis. Functionally, cell wall formation. The polypeptide is UDP-N-acetylmuramate--L-alanine ligase (Anaeromyxobacter dehalogenans (strain 2CP-1 / ATCC BAA-258)).